The following is a 497-amino-acid chain: MAILVRLFFALFVVSVYFFRVRLRLSHIPGPFLASLTNINRRQWVTTGRAHTIHTELHRQYGKVVRAGPNTVFVSDPAAIPAIYRFNEPYQKSEFYDALMPYVRGKSIPDVFATRDEHIHRTMKQPIAAIYSMSNLVSFEPYVKSTIEYFFSRLDSLFVETGKVCNFGLWLHLFASDVMGEITFSRRLGFLETGGDMENVMANNWKFFVQAAPATQMPWLDYFWKRNPLLPGSVKPNKVIEFGVARIQERLHLSEKHPDHVNSRDFLSRFIAAKEKNSQIGPDAIMTWANSNIQAGSDTTAILLSALFYHLLKNPTSLAALCTEIDAAAKRGCLSSILTWKETRDLPYLDACVKEAARLHPPISLPLERVIPESGTVIGGFKIPGGTRVAMNPWAVHRDRDVFGADADTWRPERWLEGEEKAKTLYNSLLTFGGGHRSCLGKNISYLEIYKLVPSILLRYEIGLAEPEKEWHLENRWFVMPSRFYVRLKARNGVTKL.

Residues 2–19 form a helical membrane-spanning segment; sequence AILVRLFFALFVVSVYFF. Position 439 (Cys-439) interacts with heme. Asn-443 is a glycosylation site (N-linked (GlcNAc...) asparagine).

Belongs to the cytochrome P450 family. Requires heme as cofactor.

The protein resides in the membrane. The protein operates within phytotoxin biosynthesis. Its function is as follows. Cytochrome P450 monooxygenase; part of the gene cluster that mediates the biosynthesis of cichorine, a phytotoxin active against knapweed, corn, and soybeans. The first step in the pathway is performed by the non-reducing polyketide synthase pkbA that condenses one acetyl-CoA starter unit with 3 malonyl-CoA units. PkbA also catalyzes one methylation step to produce 3-methylorsellinate. The nonribosomal peptide synthase-like protein cicB, the cytochrome P450 monooxygenase cicH and the O-methyltransferase cicE are involved in the conversion of 3-methylorsellinate into nidulol. CicB converts 3-methylorsellinate to a yet unidentified intermediate, cicH may play a ring-closing role for cichorine and cicE is plausibly responsible for the methylation of one of the phenol groups. The oxidoreductase cicC acts downstream with still unidentified enzymes to further convert nidulol into cichorine. In Emericella nidulans (strain FGSC A4 / ATCC 38163 / CBS 112.46 / NRRL 194 / M139) (Aspergillus nidulans), this protein is Cytochrome P450 monooxygenase cicH.